The following is a 362-amino-acid chain: Chorismate synthase (362 aa).

NADP(+) contacts are provided by R48 and R54. FMN is bound by residues R125–S127, N238–A239, G278, K293–S297, and R319.

The protein belongs to the chorismate synthase family. As to quaternary structure, homotetramer. FMNH2 serves as cofactor.

It carries out the reaction 5-O-(1-carboxyvinyl)-3-phosphoshikimate = chorismate + phosphate. It participates in metabolic intermediate biosynthesis; chorismate biosynthesis; chorismate from D-erythrose 4-phosphate and phosphoenolpyruvate: step 7/7. Catalyzes the anti-1,4-elimination of the C-3 phosphate and the C-6 proR hydrogen from 5-enolpyruvylshikimate-3-phosphate (EPSP) to yield chorismate, which is the branch point compound that serves as the starting substrate for the three terminal pathways of aromatic amino acid biosynthesis. This reaction introduces a second double bond into the aromatic ring system. In Tolumonas auensis (strain DSM 9187 / NBRC 110442 / TA 4), this protein is Chorismate synthase.